The primary structure comprises 398 residues: Cytochrome b (398 aa).

Transmembrane regions (helical) follow at residues phenylalanine 38–methionine 58, tryptophan 82–phenylalanine 104, valine 119–valine 139, and phenylalanine 185–alanine 205. Positions 88 and 102 each coordinate heme b. Heme b is bound by residues histidine 189 and histidine 203. Histidine 208 lines the a ubiquinone pocket. 4 consecutive transmembrane segments (helical) span residues phenylalanine 231 to phenylalanine 251, alanine 295 to lysine 315, isoleucine 327 to cysteine 347, and phenylalanine 354 to proline 373.

Belongs to the cytochrome b family. In terms of assembly, the main subunits of complex b-c1 are: cytochrome b, cytochrome c1 and the Rieske protein. Heme b is required as a cofactor.

The protein localises to the mitochondrion inner membrane. In terms of biological role, component of the ubiquinol-cytochrome c reductase complex (complex III or cytochrome b-c1 complex) that is part of the mitochondrial respiratory chain. The b-c1 complex mediates electron transfer from ubiquinol to cytochrome c. Contributes to the generation of a proton gradient across the mitochondrial membrane that is then used for ATP synthesis. The protein is Cytochrome b (MT-CYB) of Triticum aestivum (Wheat).